Consider the following 359-residue polypeptide: Adenosine 3'-phospho 5'-phosphosulfate transporter 1 (359 aa).

7 consecutive transmembrane segments (helical) span residues 26–46 (NMKL…YGIL), 68–88 (STFL…VIVL), 157–177 (YSIA…GKIS), 184–204 (TSYG…TSTF), 228–248 (SIIS…IEFI), 254–276 (VFFD…YYTI), and 300–320 (TLIY…LVFG). The segment at 332-359 (KKHGGHSHGGSNAATTTTPSNNSNNTEK) is disordered. Over residues 340 to 359 (GGSNAATTTTPSNNSNNTEK) the composition is skewed to low complexity.

The protein belongs to the nucleotide-sugar transporter family. SLC35B subfamily.

It localises to the golgi apparatus membrane. The enzyme catalyses 3'-phosphoadenylyl sulfate(in) + adenosine 3',5'-bisphosphate(out) = 3'-phosphoadenylyl sulfate(out) + adenosine 3',5'-bisphosphate(in). Probably functions as a 3'-phosphoadenylyl sulfate:adenosine 3',5'-bisphosphate antiporter at the Golgi membranes. Mediates the transport from the cytosol into the lumen of the Golgi of 3'-phosphoadenylyl sulfate/adenosine 3'-phospho 5'-phosphosulfate (PAPS), a universal sulfuryl donor for sulfation events that take place in that compartment. The sequence is that of Adenosine 3'-phospho 5'-phosphosulfate transporter 1 (slc35b2) from Dictyostelium discoideum (Social amoeba).